The chain runs to 383 residues: Transcription termination factor Rho (383 aa).

The segment at 1–22 (MTIETTTKKRPRAARPPRPRES) is disordered. Residues 8-17 (KKRPRAARPP) are compositionally biased toward basic residues. Residues 26-93 (LETVAGLLDV…AEVESVNGST (68 aa)) form the Rho RNA-BD domain. Residues 132 to 137 (GKGQRG), 144 to 149 (KAGKTM), and Arg-175 contribute to the ATP site.

It belongs to the Rho family. As to quaternary structure, homohexamer. The homohexamer assembles into an open ring structure.

Functionally, facilitates transcription termination by a mechanism that involves Rho binding to the nascent RNA, activation of Rho's RNA-dependent ATPase activity, and release of the mRNA from the DNA template. The polypeptide is Transcription termination factor Rho (Streptosporangium roseum (strain ATCC 12428 / DSM 43021 / JCM 3005 / KCTC 9067 / NCIMB 10171 / NRRL 2505 / NI 9100)).